A 276-amino-acid chain; its full sequence is Hydroxyethylthiazole kinase (276 aa).

ATP-binding residues include arginine 126 and serine 172. Residue glycine 199 participates in substrate binding.

Belongs to the Thz kinase family. Mg(2+) serves as cofactor.

It catalyses the reaction 5-(2-hydroxyethyl)-4-methylthiazole + ATP = 4-methyl-5-(2-phosphooxyethyl)-thiazole + ADP + H(+). It functions in the pathway cofactor biosynthesis; thiamine diphosphate biosynthesis; 4-methyl-5-(2-phosphoethyl)-thiazole from 5-(2-hydroxyethyl)-4-methylthiazole: step 1/1. Functionally, catalyzes the phosphorylation of the hydroxyl group of 4-methyl-5-beta-hydroxyethylthiazole (THZ). The chain is Hydroxyethylthiazole kinase from Burkholderia pseudomallei (strain 1710b).